We begin with the raw amino-acid sequence, 104 residues long: Ribonuclease P protein component 4 (104 aa).

Residues cysteine 57, cysteine 60, cysteine 83, and cysteine 86 each contribute to the Zn(2+) site.

It belongs to the eukaryotic/archaeal RNase P protein component 4 family. Consists of a catalytic RNA component and at least 4-5 protein subunits. Zn(2+) serves as cofactor.

Its subcellular location is the cytoplasm. It carries out the reaction Endonucleolytic cleavage of RNA, removing 5'-extranucleotides from tRNA precursor.. Functionally, part of ribonuclease P, a protein complex that generates mature tRNA molecules by cleaving their 5'-ends. This chain is Ribonuclease P protein component 4, found in Saccharolobus islandicus (strain M.16.27) (Sulfolobus islandicus).